The chain runs to 117 residues: Immunoglobulin kappa variable 1D-43 (117 aa).

The signal sequence occupies residues 1–22 (MDMRVPAQRLGLLLLWFPGARC). A framework-1 region spans residues 23 to 45 (AIRMTQSPFSLSASVGDRVTITC). The Ig-like domain occupies 23–117 (AIRMTQSPFS…YYCQQYYSTP (95 aa)). Cysteine 45 and cysteine 110 are oxidised to a cystine. The segment at 46–56 (WASQGISSYLA) is complementarity-determining-1. A framework-2 region spans residues 57–71 (WYQQKPAKAPKLFIY). The segment at 72 to 78 (YASSLQS) is complementarity-determining-2. Positions 79–110 (GVPSRFSGSGSGTDYTLTISSLQPEDFATYYC) are framework-3. The interval 111–117 (QQYYSTP) is complementarity-determining-3.

As to quaternary structure, immunoglobulins are composed of two identical heavy chains and two identical light chains; disulfide-linked.

It is found in the secreted. The protein resides in the cell membrane. Its function is as follows. V region of the variable domain of immunoglobulin light chains that participates in the antigen recognition. Immunoglobulins, also known as antibodies, are membrane-bound or secreted glycoproteins produced by B lymphocytes. In the recognition phase of humoral immunity, the membrane-bound immunoglobulins serve as receptors which, upon binding of a specific antigen, trigger the clonal expansion and differentiation of B lymphocytes into immunoglobulins-secreting plasma cells. Secreted immunoglobulins mediate the effector phase of humoral immunity, which results in the elimination of bound antigens. The antigen binding site is formed by the variable domain of one heavy chain, together with that of its associated light chain. Thus, each immunoglobulin has two antigen binding sites with remarkable affinity for a particular antigen. The variable domains are assembled by a process called V-(D)-J rearrangement and can then be subjected to somatic hypermutations which, after exposure to antigen and selection, allow affinity maturation for a particular antigen. The sequence is that of Immunoglobulin kappa variable 1D-43 from Homo sapiens (Human).